Here is a 248-residue protein sequence, read N- to C-terminus: PACRG-like protein (248 aa).

M1 bears the N-acetylmethionine mark. Residues 1–29 (MQKSEGSGGTQLKNRATGNYDQRTSSSTQ) are compositionally biased toward polar residues. Residues 1 to 71 (MQKSEGSGGT…LNPKTINPFG (71 aa)) are disordered. A compositionally biased stretch (low complexity) spans 39 to 49 (SKSSLSTSSPE). S47 carries the post-translational modification Phosphoserine.

In Homo sapiens (Human), this protein is PACRG-like protein (PACRGL).